Consider the following 373-residue polypeptide: GPN-loop GTPase 1 (373 aa).

N-acetylalanine is present on Ala2. Position 29-34 (29-34 (GSGKTT)) interacts with GTP. The Gly-Pro-Asn (GPN)-loop; involved in dimer interface motif lies at 86–88 (GPN). Position 189 to 192 (189 to 192 (NKTD)) interacts with GTP. 3 positions are modified to phosphoserine: Ser301, Ser312, and Ser314. Positions 304–373 (LDTGTATGSS…SMAQYWKKNK (70 aa)) are disordered. Thr328 carries the post-translational modification Phosphothreonine. The span at 330-342 (DEEDEEADSDTDD) shows a compositional bias: acidic residues. Ser338 is subject to Phosphoserine. At Thr340 the chain carries Phosphothreonine. The span at 343–355 (IDHRVTEESREEP) shows a compositional bias: basic and acidic residues.

It belongs to the GPN-loop GTPase family. Heterodimer with GPN3. Binds to RNA polymerase II (RNAPII). Interacts directly with RNAPII subunits RPB4 and RPB7 and the CTD of RPB1. Interacts with XPA.

It localises to the cytoplasm. The protein resides in the nucleus. In terms of biological role, small GTPase required for proper nuclear import of RNA polymerase II (RNAPII). May act at an RNAP assembly step prior to nuclear import. Forms an interface between the RNA polymerase II enzyme and chaperone/scaffolding proteins, suggesting that it is required to connect RNA polymerase II to regulators of protein complex formation. May be involved in nuclear localization of XPA. In Bos taurus (Bovine), this protein is GPN-loop GTPase 1.